Here is an 82-residue protein sequence, read N- to C-terminus: Transcription elongation factor 1 homolog (82 aa).

4 residues coordinate Zn(2+): Cys26, Cys29, Cys50, and Cys53.

Belongs to the ELOF1 family.

It is found in the nucleus. Transcription elongation factor implicated in the maintenance of proper chromatin structure in actively transcribed regions. This chain is Transcription elongation factor 1 homolog, found in Drosophila melanogaster (Fruit fly).